A 249-amino-acid polypeptide reads, in one-letter code: Proteasome subunit alpha type-7 (249 aa).

It belongs to the peptidase T1A family. In terms of assembly, the 26S proteasome consists of a 20S proteasome core and two 19S regulatory subunits. The 20S proteasome core is a barrel-shaped complex made of 28 subunits that are arranged in four stacked rings. The two outer rings are each formed by seven alpha subunits, and the two inner rings are formed by seven beta subunits. The proteolytic activity is exerted by three beta-subunits PSMB5, PSMB6 and PSMB7. PSMA7 interacts directly with the PSMG1-PSMG2 heterodimer which promotes 20S proteasome assembly. Interacts with HIF1A. Interacts with RAB7A. Interacts with PRKN. Interacts with ABL1 and ABL2. Interacts with EMAP2. Interacts with MAVS.

It localises to the cytoplasm. The protein resides in the nucleus. In terms of biological role, component of the 20S core proteasome complex involved in the proteolytic degradation of most intracellular proteins. This complex plays numerous essential roles within the cell by associating with different regulatory particles. Associated with two 19S regulatory particles, forms the 26S proteasome and thus participates in the ATP-dependent degradation of ubiquitinated proteins. The 26S proteasome plays a key role in the maintenance of protein homeostasis by removing misfolded or damaged proteins that could impair cellular functions, and by removing proteins whose functions are no longer required. Associated with the PA200 or PA28, the 20S proteasome mediates ubiquitin-independent protein degradation. This type of proteolysis is required in several pathways including spermatogenesis (20S-PA200 complex) or generation of a subset of MHC class I-presented antigenic peptides (20S-PA28 complex). Inhibits the transactivation function of HIF-1A under both normoxic and hypoxia-mimicking conditions. The interaction with EMAP2 increases the proteasome-mediated HIF-1A degradation under the hypoxic conditions. Plays a role in hepatitis C virus internal ribosome entry site-mediated translation. Mediates nuclear translocation of the androgen receptor (AR) and thereby enhances androgen-mediated transactivation. Promotes MAVS degradation and thereby negatively regulates MAVS-mediated innate immune response. In Gallus gallus (Chicken), this protein is Proteasome subunit alpha type-7 (PSMA7).